Consider the following 294-residue polypeptide: HTH-type transcriptional regulator TcbR (294 aa).

An HTH lysR-type domain is found at Met-1–Thr-58. A DNA-binding region (H-T-H motif) is located at residues Met-18–Gln-37.

The protein belongs to the LysR transcriptional regulatory family.

In terms of biological role, involved in regulation of chlorinated catechol metabolism. Transcriptional activator of the tcbCDEF chlorocatechol oxidative operon. May bind 2-chloromuconate as an inducer. The protein is HTH-type transcriptional regulator TcbR (tcbR) of Pseudomonas sp. (strain P51).